The chain runs to 674 residues: F420-dependent formate dehydrogenase 1 subunit alpha (674 aa).

Residues 3 to 59 (LDFIHTICPYCGTGCGVDLVVKDGTLVGTNPFKRHPVNEGKTCIKGSYCHEFVHRDD) form the 4Fe-4S Mo/W bis-MGD-type domain. 4 residues coordinate [4Fe-4S] cluster: C10, C13, C17, and C45. A non-standard amino acid (selenocysteine) is located at residue U132.

Belongs to the prokaryotic molybdopterin-containing oxidoreductase family. As to quaternary structure, dimer of an alpha (FdhA1) and a beta (FdhB1) subunit. It depends on [4Fe-4S] cluster as a cofactor. Mo-bis(molybdopterin guanine dinucleotide) serves as cofactor. Zn(2+) is required as a cofactor.

The enzyme catalyses oxidized coenzyme F420-(gamma-L-Glu)(n) + formate + 2 H(+) = reduced coenzyme F420-(gamma-L-Glu)(n) + CO2. Its function is as follows. Catalyzes the oxidation of formate to carbon dioxide, with coenzyme F420 as the electron acceptor. In vitro can also use methyl viologen as electron acceptor. The polypeptide is F420-dependent formate dehydrogenase 1 subunit alpha (Methanococcus maripaludis (strain DSM 14266 / JCM 13030 / NBRC 101832 / S2 / LL)).